Here is a 195-residue protein sequence, read N- to C-terminus: dCTP deaminase (195 aa).

DCTP contacts are provided by residues 105–110, Asp-123, 131–133, Gln-152, Tyr-166, Lys-173, and Gln-177; these read RSSLGR and TLE. Glu-133 functions as the Proton donor/acceptor in the catalytic mechanism. Residues 159 to 195 form a disordered region; sequence KSPAERPYGAERGSKYQGQTGPQASRIQGDREFGGDQ. Residues 160–172 show a composition bias toward basic and acidic residues; it reads SPAERPYGAERGS. A compositionally biased stretch (polar residues) spans 174-184; the sequence is YQGQTGPQASR. The span at 186 to 195 shows a compositional bias: basic and acidic residues; sequence QGDREFGGDQ.

Belongs to the dCTP deaminase family. In terms of assembly, homotrimer.

It catalyses the reaction dCTP + H2O + H(+) = dUTP + NH4(+). The protein operates within pyrimidine metabolism; dUMP biosynthesis; dUMP from dCTP (dUTP route): step 1/2. In terms of biological role, catalyzes the deamination of dCTP to dUTP. In Natronomonas pharaonis (strain ATCC 35678 / DSM 2160 / CIP 103997 / JCM 8858 / NBRC 14720 / NCIMB 2260 / Gabara) (Halobacterium pharaonis), this protein is dCTP deaminase.